A 131-amino-acid polypeptide reads, in one-letter code: Small ribosomal subunit protein uS12 (131 aa).

Aspartate 89 is subject to 3-methylthioaspartic acid. A disordered region spans residues 106–131; the sequence is GVDGRKQGRSKYGAKKAKVAKTASAK. Over residues 112–124 the composition is skewed to basic residues; that stretch reads QGRSKYGAKKAKV.

Belongs to the universal ribosomal protein uS12 family. In terms of assembly, part of the 30S ribosomal subunit. Contacts proteins S8 and S17. May interact with IF1 in the 30S initiation complex.

Its function is as follows. With S4 and S5 plays an important role in translational accuracy. Interacts with and stabilizes bases of the 16S rRNA that are involved in tRNA selection in the A site and with the mRNA backbone. Located at the interface of the 30S and 50S subunits, it traverses the body of the 30S subunit contacting proteins on the other side and probably holding the rRNA structure together. The combined cluster of proteins S8, S12 and S17 appears to hold together the shoulder and platform of the 30S subunit. This chain is Small ribosomal subunit protein uS12, found in Endomicrobium trichonymphae.